The chain runs to 121 residues: UPF0102 protein Hhal_2103 (121 aa).

Residues 1–20 (MMAPQTTRNDPRQRGQEAEE) are disordered. Over residues 9–20 (NDPRQRGQEAEE) the composition is skewed to basic and acidic residues.

It belongs to the UPF0102 family.

The sequence is that of UPF0102 protein Hhal_2103 from Halorhodospira halophila (strain DSM 244 / SL1) (Ectothiorhodospira halophila (strain DSM 244 / SL1)).